The primary structure comprises 46 residues: Protein PsbN (46 aa).

Residues 5-27 (TLVTLFVSGLLMSFTGYALYTAF) traverse the membrane as a helical segment.

This sequence belongs to the PsbN family.

The protein localises to the plastid membrane. Its function is as follows. May play a role in photosystem I and II biogenesis. The sequence is that of Protein PsbN from Cuscuta obtusiflora (Peruvian dodder).